The chain runs to 137 residues: Peptide methionine sulfoxide reductase MsrB (137 aa).

The interval 1–33 (MSNNQDRPGQITDESLRERLSPEAYAVTRRAGT) is disordered. The 123-residue stretch at 13 to 135 (DESLRERLSP…NSLSLDFKAA (123 aa)) folds into the MsrB domain. Residues Cys-52, Cys-55, Cys-101, and Cys-104 each contribute to the Zn(2+) site. Catalysis depends on Cys-124, which acts as the Nucleophile.

It belongs to the MsrB Met sulfoxide reductase family. The cofactor is Zn(2+).

It carries out the reaction L-methionyl-[protein] + [thioredoxin]-disulfide + H2O = L-methionyl-(R)-S-oxide-[protein] + [thioredoxin]-dithiol. This is Peptide methionine sulfoxide reductase MsrB from Thioalkalivibrio sulfidiphilus (strain HL-EbGR7).